Here is a 394-residue protein sequence, read N- to C-terminus: Protein-glutamate methylesterase/protein-glutamine glutaminase of group 2 operon (394 aa).

In terms of domain architecture, Response regulatory spans 21–139 (RVMVVDDSAV…ELTGADTFKR (119 aa)). Position 72 is a 4-aspartylphosphate (aspartate 72). The interval 148-201 (LGAAARRSGPRREGTAAARPPGAAAQPTSGYTLPSPVRAKPETGPLTVRPLPPD) is disordered. Residues 162 to 172 (TAAARPPGAAA) show a composition bias toward low complexity. Residues 200-382 (PDGRPDVIAI…SAILPLKEIG (183 aa)) form the CheB-type methylesterase domain. Catalysis depends on residues serine 212, histidine 238, and aspartate 334.

Belongs to the CheB family. In terms of processing, phosphorylated by CheA. Phosphorylation of the N-terminal regulatory domain activates the methylesterase activity.

It is found in the cytoplasm. It catalyses the reaction [protein]-L-glutamate 5-O-methyl ester + H2O = L-glutamyl-[protein] + methanol + H(+). The catalysed reaction is L-glutaminyl-[protein] + H2O = L-glutamyl-[protein] + NH4(+). In terms of biological role, involved in chemotaxis. Part of a chemotaxis signal transduction system that modulates chemotaxis in response to various stimuli. Catalyzes the demethylation of specific methylglutamate residues introduced into the chemoreceptors (methyl-accepting chemotaxis proteins or MCP) by CheR. Also mediates the irreversible deamidation of specific glutamine residues to glutamic acid. This Rhodospirillum centenum (strain ATCC 51521 / SW) protein is Protein-glutamate methylesterase/protein-glutamine glutaminase of group 2 operon.